Reading from the N-terminus, the 126-residue chain is Aspartate 1-decarboxylase (126 aa).

Serine 25 serves as the catalytic Schiff-base intermediate with substrate; via pyruvic acid. Serine 25 bears the Pyruvic acid (Ser) mark. Substrate is bound at residue threonine 57. Catalysis depends on tyrosine 58, which acts as the Proton donor. 73–75 is a binding site for substrate; sequence GAA.

Belongs to the PanD family. Heterooctamer of four alpha and four beta subunits. Pyruvate is required as a cofactor. Post-translationally, is synthesized initially as an inactive proenzyme, which is activated by self-cleavage at a specific serine bond to produce a beta-subunit with a hydroxyl group at its C-terminus and an alpha-subunit with a pyruvoyl group at its N-terminus.

The protein resides in the cytoplasm. The catalysed reaction is L-aspartate + H(+) = beta-alanine + CO2. It participates in cofactor biosynthesis; (R)-pantothenate biosynthesis; beta-alanine from L-aspartate: step 1/1. Functionally, catalyzes the pyruvoyl-dependent decarboxylation of aspartate to produce beta-alanine. This chain is Aspartate 1-decarboxylase, found in Yersinia pseudotuberculosis serotype IB (strain PB1/+).